The primary structure comprises 446 residues: D(1A) dopamine receptor (446 aa).

Residues 1-22 (MAPNTSTMDETGLPVERDFSFR) lie on the Extracellular side of the membrane. N-linked (GlcNAc...) asparagine glycosylation is present at asparagine 4. Residues 23 to 48 (ILTACFLSLLILSTLLGNTLVCAAVI) form a helical membrane-spanning segment. At 49–59 (RFRHLRSKVTN) the chain is on the cytoplasmic side. Residues 60–86 (FFVISLAVSDLLVAVLVMPWKAVAEIA) traverse the membrane as a helical segment. Over 87 to 95 (GFWPFGSFC) the chain is Extracellular. Residues cysteine 95 and cysteine 186 are joined by a disulfide bond. Residues 96–118 (NIWVAFDIMCSTASILNLCVISV) traverse the membrane as a helical segment. At 119–137 (DRYWAISSPFQYERKMTPK) the chain is on the cytoplasmic side. The helical transmembrane segment at 138-162 (AAFILISVAWTLSVLISFIPVQLSW) threads the bilayer. Residues 163–192 (HKAKPTWPLDGNFTSLEDAEDDNCDTRLSR) are Extracellular-facing. The helical transmembrane segment at 193–218 (TYAISSSLISFYIPVAIMIVTYTSIY) threads the bilayer. Residues 219–272 (RIAQKQIRRISALERAAVHAKNCQTTTGNGNPVECSQSESSFKMSFKRETKVLK) lie on the Cytoplasmic side of the membrane. Residues 273 to 299 (TLSVIMGVFVCCWLPFFISNCMVPFCG) form a helical membrane-spanning segment. Residues 300–312 (SEETQPFCIDSIT) are Extracellular-facing. A helical membrane pass occupies residues 313–337 (FDVFVWFGWANSSLNPIIYAFNADF). Over 338-446 (QKAFSTLLGC…PVTHSGQHST (109 aa)) the chain is Cytoplasmic. S-palmitoyl cysteine attachment occurs at residues cysteine 347 and cysteine 351. The residue at position 441 (serine 441) is a Phosphoserine.

Belongs to the G-protein coupled receptor 1 family. Interacts with DNAJC14 via its C-terminus. Interacts with DRD2. Interacts with DORIP1.

It localises to the cell membrane. The protein localises to the endoplasmic reticulum membrane. Its subcellular location is the cell projection. It is found in the cilium membrane. The protein resides in the dendrite. It localises to the dendritic spine. Its function is as follows. Dopamine receptor whose activity is mediated by G proteins which activate adenylyl cyclase. This chain is D(1A) dopamine receptor (Drd1), found in Mus musculus (Mouse).